The sequence spans 581 residues: Proline--tRNA ligase (581 aa).

Belongs to the class-II aminoacyl-tRNA synthetase family. ProS type 1 subfamily. As to quaternary structure, homodimer.

The protein localises to the cytoplasm. The catalysed reaction is tRNA(Pro) + L-proline + ATP = L-prolyl-tRNA(Pro) + AMP + diphosphate. In terms of biological role, catalyzes the attachment of proline to tRNA(Pro) in a two-step reaction: proline is first activated by ATP to form Pro-AMP and then transferred to the acceptor end of tRNA(Pro). As ProRS can inadvertently accommodate and process non-cognate amino acids such as alanine and cysteine, to avoid such errors it has two additional distinct editing activities against alanine. One activity is designated as 'pretransfer' editing and involves the tRNA(Pro)-independent hydrolysis of activated Ala-AMP. The other activity is designated 'posttransfer' editing and involves deacylation of mischarged Ala-tRNA(Pro). The misacylated Cys-tRNA(Pro) is not edited by ProRS. This is Proline--tRNA ligase from Leptothrix cholodnii (strain ATCC 51168 / LMG 8142 / SP-6) (Leptothrix discophora (strain SP-6)).